The chain runs to 145 residues: Ribonuclease H (145 aa).

In terms of domain architecture, RNase H type-1 spans methionine 1–lysine 142. Residues aspartate 9, glutamate 47, aspartate 69, and aspartate 134 each coordinate Mg(2+).

It belongs to the RNase H family. Monomer. Mg(2+) serves as cofactor.

Its subcellular location is the cytoplasm. The enzyme catalyses Endonucleolytic cleavage to 5'-phosphomonoester.. Endonuclease that specifically degrades the RNA of RNA-DNA hybrids. The polypeptide is Ribonuclease H (Caldicellulosiruptor saccharolyticus (strain ATCC 43494 / DSM 8903 / Tp8T 6331)).